A 330-amino-acid polypeptide reads, in one-letter code: MTSYRNFGIVGGGAWGTALAQLLAADGAPVRLWAREADVVAAINAEHRNPVFLPGAPLSSSLTATTDLAAMTDLDALLVVVPVPYLRAVLTELPPGDAPLVFCSKGMEAGSFAFPVDMARDLAPGRPHAVLSGPTFAHEVAAGLPTAITLAAADPALATELAQALARPHFRPYVSTDVIGAEIGGAVKNILAIACGIVEGAGLGLNARAALISRGFAEMTRFGLSRGAKAETLAGLAGLGDLVLTCTSANSRNFALGQGLGRGEAIETLMADRRTIAEGAFSAPVVAAAARADGVDMPITDTVARLVAGEMRVADAIQALLSRPLRPEGQ.

Trp-15, Arg-35, and Lys-105 together coordinate NADPH. Sn-glycerol 3-phosphate-binding residues include Lys-105, Gly-133, and Thr-135. Ala-137 serves as a coordination point for NADPH. Positions 188, 241, 251, 252, and 253 each coordinate sn-glycerol 3-phosphate. The active-site Proton acceptor is the Lys-188. An NADPH-binding site is contributed by Arg-252. Positions 276 and 278 each coordinate NADPH.

Belongs to the NAD-dependent glycerol-3-phosphate dehydrogenase family.

It is found in the cytoplasm. It catalyses the reaction sn-glycerol 3-phosphate + NAD(+) = dihydroxyacetone phosphate + NADH + H(+). The enzyme catalyses sn-glycerol 3-phosphate + NADP(+) = dihydroxyacetone phosphate + NADPH + H(+). Its pathway is membrane lipid metabolism; glycerophospholipid metabolism. In terms of biological role, catalyzes the reduction of the glycolytic intermediate dihydroxyacetone phosphate (DHAP) to sn-glycerol 3-phosphate (G3P), the key precursor for phospholipid synthesis. The sequence is that of Glycerol-3-phosphate dehydrogenase [NAD(P)+] 1 from Sphingopyxis alaskensis (strain DSM 13593 / LMG 18877 / RB2256) (Sphingomonas alaskensis).